A 372-amino-acid polypeptide reads, in one-letter code: MHC class I-like protein MILL2 (372 aa).

The first 26 residues, Met1 to Gly26, serve as a signal peptide directing secretion. An alpha-1 region spans residues Arg28 to Gly119. 3 disulfides stabilise this stretch: Cys78–Cys89, Cys129–Cys191, and Cys230–Cys287. Positions Pro120–Gly210 are alpha-2. N-linked (GlcNAc...) asparagine glycans are attached at residues Asn134, Asn234, and Asn293. Positions Pro192–Ser302 constitute an Ig-like C1-type domain. Residues Ser211–Asn339 form an alpha-3 region. A disordered region spans residues Trp308–Ser349. Residues Gln317–Val331 are compositionally biased toward basic and acidic residues. The connecting peptide stretch occupies residues Ala340 to Ser348. The GPI-anchor amidated serine moiety is linked to residue Ser349. The propeptide at Cys350–Asn372 is removed in mature form.

The protein belongs to the MHC class I family. Heterodimer with B2M. In terms of tissue distribution, ubiquitously expressed in neonatal and adult tissues.

The protein resides in the cell membrane. In terms of biological role, binds to heparan sulfate proteoglycans on the surface of fibroblast cells. In Rattus norvegicus (Rat), this protein is MHC class I-like protein MILL2.